Here is a 265-residue protein sequence, read N- to C-terminus: Protein ENDO16 (265 aa).

A Cell attachment site motif is present at residues 25-27; the sequence is RGD. The segment at 71-265 is disordered; that stretch reads SPNAPSSQME…KEEEEEERSG (195 aa). Over residues 73-92 the composition is skewed to polar residues; the sequence is NAPSSQMESEGSANPSTIGS. Repeat copies occupy residues 75 to 94, 105 to 124, 128 to 147, and 148 to 167. The interval 75–257 is 6 X approximate repeats; that stretch reads PSSQMESEGS…QSESEDPEKE (183 aa). 6 stretches are compositionally biased toward acidic residues: residues 112-125, 133-144, 152-169, 194-212, 222-243, and 250-265; these read EGSEGEDSEETEGA, ESEGGDQEESEG, MESEGQEPESEEDVDSGE, EVDEQTSDGEEPEEPEEPG, ESEGEGNESEEEEVEEPQEVIE, and ESEDPEKEEEEEERSG. Tandem repeats lie at residues 217–236 and 238–257. N228 carries N-linked (GlcNAc...) asparagine glycosylation.

First expressed in the vegetal plate and progressively the expression becomes restricted to a subset of endodermal cells as development proceeds.

May be an adhesion molecule involved in gastrulation of the sea urchin embryo. In Strongylocentrotus purpuratus (Purple sea urchin), this protein is Protein ENDO16 (ENDO16).